Consider the following 443-residue polypeptide: Methylenetetrahydrofolate--tRNA-(uracil-5-)-methyltransferase TrmFO (443 aa).

Position 8-13 (8-13 (GAGLAG)) interacts with FAD.

It belongs to the MnmG family. TrmFO subfamily. It depends on FAD as a cofactor.

The protein resides in the cytoplasm. The catalysed reaction is uridine(54) in tRNA + (6R)-5,10-methylene-5,6,7,8-tetrahydrofolate + NADH + H(+) = 5-methyluridine(54) in tRNA + (6S)-5,6,7,8-tetrahydrofolate + NAD(+). It carries out the reaction uridine(54) in tRNA + (6R)-5,10-methylene-5,6,7,8-tetrahydrofolate + NADPH + H(+) = 5-methyluridine(54) in tRNA + (6S)-5,6,7,8-tetrahydrofolate + NADP(+). Catalyzes the folate-dependent formation of 5-methyl-uridine at position 54 (M-5-U54) in all tRNAs. The sequence is that of Methylenetetrahydrofolate--tRNA-(uracil-5-)-methyltransferase TrmFO from Thermus thermophilus (strain ATCC BAA-163 / DSM 7039 / HB27).